Consider the following 436-residue polypeptide: MAVNLSRNGPALQEAYVRVVTEKSPTDWALFTYEGNSNDIRVAGTGEGGLEELVEELNSGKVMYAFCRVKDPNSGLPKFVLINWTGEGVNDVRKGACANHVSTMANFLKGAHVTINARAEEDVEPECIMEKVAKASGANYSFHKESSCFQDVGPQAPVGSVYQKTNAVSEIKRVGKDNFWAKAEKEEENRRLEEKRRAEEEKQRLEEERRERELQEAARREQRYQEQHRSAGPPSPSSRTGELEQEVVSRSRQEWESAGQQAPHPREIFKQKERAMSTTSVSSSQPGKLRSPFLQKQFTQPEASYGREPTSPVSRPAAGVCEELAPSTPPSAQTDDEPTYEVPSEQETLYEEPPPVQQPGAGSGHIDNYMQSQDLSGQGLCARALYDYQAADDTEISFDPENLITGIEVIDEGWWRGYGPDGHFGMFPANYVELIE.

The 132-residue stretch at Ala2–Ala133 folds into the ADF-H domain. Thr26 carries the post-translational modification Phosphothreonine. A Phosphoserine modification is found at Ser160. Lys176 is modified (N6-acetyllysine). Residues Asn178–Gly232 are a coiled coil. Basic and acidic residues-rich tracts occupy residues Lys185 to Arg229 and His264 to Ala275. Positions Lys185–Gln371 are disordered. Residues Met276–Pro286 show a composition bias toward polar residues. Residues Ser277, Ser280, Ser283, and Ser291 each carry the phosphoserine modification. Lys296 carries the post-translational modification N6-acetyllysine. Thr299 carries the post-translational modification Phosphothreonine. Position 311 is a phosphoserine (Ser311). A phosphotyrosine mark is found at Tyr340 and Tyr350. The 60-residue stretch at Gly377–Glu436 folds into the SH3 domain.

The protein belongs to the ABP1 family. In terms of assembly, interacts with FGD1, MAP4K1 and PRAM1. Interacts with ANKRD54. Interacts with WASL and WIPF1. Interacts with SHANK2 and SHANK3. Interacts with both COBL and PACSIN1. Interacts with DNM1 and SYN1. Detected in brain (at protein level). Widely expressed in brain with highest levels in hippocampus and cerebral cortex. Located primarily in dendrites and, in moderate amounts, in cell bodies. Isoform 1 and isoform 3 are the predominant isoforms in brain.

It localises to the cytoplasm. Its subcellular location is the cytoskeleton. The protein resides in the cell projection. The protein localises to the lamellipodium. It is found in the ruffle. It localises to the cell cortex. Its subcellular location is the cytosol. The protein resides in the cell membrane. The protein localises to the synapse. It is found in the perikaryon. It localises to the neuron projection. Its subcellular location is the dendrite. The protein resides in the postsynaptic density. The protein localises to the golgi apparatus membrane. It is found in the cytoplasmic vesicle. It localises to the clathrin-coated vesicle membrane. Its subcellular location is the podosome. The protein resides in the early endosome. Functionally, adapter protein that binds F-actin and DNM1, and thereby plays a role in receptor-mediated endocytosis. Required for the formation of organized podosome rosettes. May act as a common effector of antigen receptor-signaling pathways in leukocytes. Acts as a key component of the immunological synapse that regulates T-cell activation by bridging TCRs and the actin cytoskeleton to gene activation and endocytic processes. Plays a role in the reorganization of the actin cytoskeleton, formation of cell projections, such as neurites, in neuron morphogenesis and synapse formation via its interaction with WASL and COBL. Does not bind G-actin and promote actin polymerization by itself. This chain is Drebrin-like protein, found in Rattus norvegicus (Rat).